The sequence spans 422 residues: MGLSYQLLLCLLLCGGAKQCCSQPLWLLPGGTPTPGKLTSSVEVECLEAELVVTVSRDLFGTGKLIQPEDLTLGSENCRPLVSVATDVVRFKAQLHECSNRVQVTEDALVYSTVLLHQPRPVPGLSILRTNRADVPIECRYPRQGNVSSHAIRPTWVPFSTTVSSEEKLVFSLRLMEENWNTEKLSPTSHLGEVAYLQAEVQTGSHLPLLLFVDRCVPTPSPDQTASPYHVIVDFHGCLVDGLSESFSAFQVPRPRPETLQFTVDVFHFANSSRNTIYITCHLKVTPANQTPDELNKACSFNRSSKSWSPVEGDAEVCGCCSSGDCGSSSRSRYQAHGVSQWPKSASRRRRHVRDEADVTVGPLIFLGKASDQAVEGWASSAQTSLALGLGLAAVAFLTLAAIVLGVTRSCHTPSHVVSLSQ.

The signal sequence occupies residues 1-22; the sequence is MGLSYQLLLCLLLCGGAKQCCS. Gln-23 is modified (pyrrolidone carboxylic acid). Residues 23–386 are Extracellular-facing; the sequence is QPLWLLPGGT…GWASSAQTSL (364 aa). Thr-32 and Thr-34 each carry an O-linked (GalNAc...) threonine glycan. A ZP domain is found at 45–306; it reads ECLEAELVVT…KACSFNRSSK (262 aa). Cystine bridges form between Cys-46-Cys-139 and Cys-78-Cys-98. The N-linked (GlcNAc...) asparagine glycan is linked to Asn-146. Residues Thr-155, Thr-161, and Thr-162 are each glycosylated (O-linked (GalNAc...) threonine). Intrachain disulfides connect Cys-216–Cys-281 and Cys-238–Cys-299. Asn-271 and Asn-302 each carry an N-linked (GlcNAc...) asparagine glycan. The propeptide at 350 to 422 is removed in mature form; that stretch reads RRHVRDEADV…TPSHVVSLSQ (73 aa). A helical membrane pass occupies residues 387-407; that stretch reads ALGLGLAAVAFLTLAAIVLGV. The Cytoplasmic segment spans residues 408–422; that stretch reads TRSCHTPSHVVSLSQ.

It belongs to the ZP domain family. ZPC subfamily. As to quaternary structure, polymers of ZP2 and ZP3 organized into long filaments cross-linked by ZP1 homodimers. Interacts with ZP1 and ZP2. Proteolytically cleaved before the transmembrane segment to yield the secreted ectodomain incorporated in the zona pellucida. Post-translationally, N-glycosylated. In terms of processing, O-glycosylated; removal of O-linked glycans may play an important role in the post-fertilization block to polyspermy. In terms of tissue distribution, expressed in oocytes.

It is found in the zona pellucida. Its subcellular location is the cell membrane. Functionally, component of the zona pellucida, an extracellular matrix surrounding oocytes which mediates sperm binding, induction of the acrosome reaction and prevents post-fertilization polyspermy. The zona pellucida is composed of 3 to 4 glycoproteins, ZP1, ZP2, ZP3, and ZP4. ZP3 is essential for sperm binding and zona matrix formation. The sequence is that of Zona pellucida sperm-binding protein 3 (ZP3) from Mesocricetus auratus (Golden hamster).